The primary structure comprises 340 residues: Trimethylamine N-oxide transport system ATP-binding protein TmoW (340 aa).

The 237-residue stretch at 32–268 (GRSFDDIRAD…PTTGYVAKFT (237 aa)) folds into the ABC transporter domain. 64–71 (GLSGSGKS) serves as a coordination point for ATP.

This sequence belongs to the ABC transporter superfamily. The complex is probably composed of two ATP-binding proteins (TmoW), two transmembrane proteins (TmoV) and a solute-binding protein (TmoX).

It localises to the cell inner membrane. The enzyme catalyses a quaternary ammonium(out) + ATP + H2O = a quaternary ammonium(in) + ADP + phosphate + H(+). Functionally, part of the ABC transporter complex TmoXWV involved in trimethylamine N-oxide (TMAO) import. Responsible for energy coupling to the transport system. Is specific for TMAO and essential for TMAO metabolism. The chain is Trimethylamine N-oxide transport system ATP-binding protein TmoW from Ruegeria pomeroyi (strain ATCC 700808 / DSM 15171 / DSS-3) (Silicibacter pomeroyi).